Here is a 570-residue protein sequence, read N- to C-terminus: Protein HEATR9 (570 aa).

This is Protein HEATR9 (HEATR9) from Homo sapiens (Human).